A 442-amino-acid chain; its full sequence is Tubulin beta chain (442 aa).

Positions 11, 69, 138, 142, 143, 144, 204, and 226 each coordinate GTP. Residue E69 coordinates Mg(2+).

Belongs to the tubulin family. Dimer of alpha and beta chains. A typical microtubule is a hollow water-filled tube with an outer diameter of 25 nm and an inner diameter of 15 nM. Alpha-beta heterodimers associate head-to-tail to form protofilaments running lengthwise along the microtubule wall with the beta-tubulin subunit facing the microtubule plus end conferring a structural polarity. Microtubules usually have 13 protofilaments but different protofilament numbers can be found in some organisms and specialized cells. Mg(2+) is required as a cofactor.

Its subcellular location is the cytoplasm. The protein localises to the cytoskeleton. Functionally, tubulin is the major constituent of microtubules, a cylinder consisting of laterally associated linear protofilaments composed of alpha- and beta-tubulin heterodimers. Microtubules grow by the addition of GTP-tubulin dimers to the microtubule end, where a stabilizing cap forms. Below the cap, tubulin dimers are in GDP-bound state, owing to GTPase activity of alpha-tubulin. The polypeptide is Tubulin beta chain (TUB-B) (Pneumocystis carinii).